The following is a 262-amino-acid chain: 27 kDa lipoprotein antigen (262 aa).

The signal sequence occupies residues 1–28 (MSASCAVPRLTRFAVFAVAGATALSLSA). Composition is skewed to low complexity over residues 28–57 (ACGSSNKSSSTSTSTSTSTSTVTSAAPSST) and 148–158 (STPGGASSTPP). Disordered stretches follow at residues 28–60 (ACGSSNKSSSTSTSTSTSTSTVTSAAPSSTPNA) and 138–171 (VNGTCPKPHESTPGGASSTPPSGSPSPAPAKPAW). The N-palmitoyl cysteine moiety is linked to residue Cys29. The S-diacylglycerol cysteine moiety is linked to residue Cys29.

The protein resides in the cell membrane. In Mycobacterium intracellulare, this protein is 27 kDa lipoprotein antigen (Mi43).